The primary structure comprises 343 residues: MPNFFKFHTVIERHWQKPYPVLSFLLKPLSGLFAKIAAKWRADFLSGKRQSEKLSVPVVVVGNIHAGGTGKTPIAAALVSGLQEKGVKVGIISRGYGRKSKAVYVLNAASRAEDAGDEPLLLFRKTGAPTAVGSSRVEAGRALLAAHPELELIVADDGLQHYALQRDVEIAVFPAADTGRTDLDLLPNGNLREPLSRLESVDAVVVGGRAADGFMPSEHLFGSRIEAGAVYRLNRPSEKLDISTLSGKRVAAVAGIARPQRFFDTLTHMGIRLDQTVALPDHADIFNRDLPPADVVLVTEKDAVKFSDGICTDNVWVLPVCAIIEPDLAEFVLERLEGVPKAV.

65 to 72 is a binding site for ATP; that stretch reads HAGGTGKT.

Belongs to the LpxK family.

It carries out the reaction a lipid A disaccharide + ATP = a lipid IVA + ADP + H(+). It participates in glycolipid biosynthesis; lipid IV(A) biosynthesis; lipid IV(A) from (3R)-3-hydroxytetradecanoyl-[acyl-carrier-protein] and UDP-N-acetyl-alpha-D-glucosamine: step 6/6. Transfers the gamma-phosphate of ATP to the 4'-position of a tetraacyldisaccharide 1-phosphate intermediate (termed DS-1-P) to form tetraacyldisaccharide 1,4'-bis-phosphate (lipid IVA). In Neisseria gonorrhoeae (strain ATCC 700825 / FA 1090), this protein is Tetraacyldisaccharide 4'-kinase.